Consider the following 504-residue polypeptide: Ribosomal protein uS12 methylthiotransferase RimO (504 aa).

The MTTase N-terminal domain maps to 21–131 (KRVGFISLGC…VMGHVRELLP (111 aa)). The [4Fe-4S] cluster site is built by Cys-30, Cys-66, Cys-95, Cys-186, Cys-190, and Cys-193. A Radical SAM core domain is found at 172-408 (LTPRHYAYVK…MEVAQRISTE (237 aa)). One can recognise a TRAM domain in the interval 411–487 (SEKVGRVMDV…EYDLFGEVIE (77 aa)).

It belongs to the methylthiotransferase family. RimO subfamily. [4Fe-4S] cluster is required as a cofactor.

It localises to the cytoplasm. It catalyses the reaction L-aspartate(89)-[ribosomal protein uS12]-hydrogen + (sulfur carrier)-SH + AH2 + 2 S-adenosyl-L-methionine = 3-methylsulfanyl-L-aspartate(89)-[ribosomal protein uS12]-hydrogen + (sulfur carrier)-H + 5'-deoxyadenosine + L-methionine + A + S-adenosyl-L-homocysteine + 2 H(+). Functionally, catalyzes the methylthiolation of an aspartic acid residue of ribosomal protein uS12. The sequence is that of Ribosomal protein uS12 methylthiotransferase RimO from Deinococcus radiodurans (strain ATCC 13939 / DSM 20539 / JCM 16871 / CCUG 27074 / LMG 4051 / NBRC 15346 / NCIMB 9279 / VKM B-1422 / R1).